The chain runs to 573 residues: Sulfate adenylyltransferase (573 aa).

The interval 1–169 is N-terminal; the sequence is MANSPHGGVL…IEAVNKLNHY (169 aa). The segment at 170–394 is catalytic; the sequence is DYVALRYTPA…LRESSPPRHT (225 aa). Q197 contacts sulfate. Residues 197-200 and 291-294 each bind ATP; these read QTRN and GRDH. Residues T198, R199, and N200 contribute to the active site. Residue R199 participates in sulfate binding. A295 provides a ligand contact to sulfate. ATP is bound at residue V333. Residues 395 to 573 are allosteric regulation domain; adenylyl-sulfate kinase-like; that stretch reads QGFTVFLTGY…LETEGFFDRA (179 aa). 3'-phosphoadenylyl sulfate is bound by residues 434–437, R451, 477–478, and R515; these read DTVR and IA.

It in the N-terminal section; belongs to the sulfate adenylyltransferase family. In the C-terminal section; belongs to the APS kinase family. In terms of assembly, homohexamer. Dimer of trimers.

Its subcellular location is the cytoplasm. The catalysed reaction is sulfate + ATP + H(+) = adenosine 5'-phosphosulfate + diphosphate. The protein operates within sulfur metabolism; hydrogen sulfide biosynthesis; sulfite from sulfate: step 1/3. With respect to regulation, allosterically inhibited by 3'-phosphoadenosine 5'-phosphosulfate (PAPS). In terms of biological role, catalyzes the first intracellular reaction of sulfate assimilation, forming adenosine-5'-phosphosulfate (APS) from inorganic sulfate and ATP. Plays an important role in sulfate activation as a component of the biosynthesis pathway of sulfur-containing amino acids. This chain is Sulfate adenylyltransferase, found in Aspergillus oryzae (strain ATCC 42149 / RIB 40) (Yellow koji mold).